Reading from the N-terminus, the 202-residue chain is Hydrogenase expression/formation protein HoxM (202 aa).

Positions 15, 61, and 92 each coordinate Ni(2+).

Belongs to the peptidase A31 family.

Its function is as follows. Absolutely required for hydrogenase activity. Mediates the attachment of hydrogenase to the bacterial membrane; attachment is a requirement for enzymatic activity. This Cupriavidus necator (strain ATCC 17699 / DSM 428 / KCTC 22496 / NCIMB 10442 / H16 / Stanier 337) (Ralstonia eutropha) protein is Hydrogenase expression/formation protein HoxM (hoxM).